Here is a 365-residue protein sequence, read N- to C-terminus: MMSGSRLASRLIIIFSIISTSFFTVESIRLFPDSFDDASSDLMEAPAYQNGLDCSVLAKNRLLLACDPSAVHIAMTLDPAYLRGTVSAVHSILKHTSCPENIFFHFIASGTSQGSLAKTLSSVFPSLSFKVYTFEETTVKNLISSSIRQALDSPLNYARSYLSEILSSCVSRVIYLDSDVIVVDDIQKLWKISLSGSRTIGAPEYCHANFTKYFTDSFWSDQKLSSVFDSKTPCYFNTGVMVIDLERWREGDYTRKIENWMKIQKEDKRIYELGSLPPFLLVFGGDIEAIDHQWNQHGLGGDNIVSSCRSLHPGPVSLIHWSGKGKPWVRLDDGKPCPIDYLWAPYDLHKSQRQYLQYNQELEIL.

Over 1-10 (MMSGSRLASR) the chain is Cytoplasmic. A helical; Signal-anchor for type II membrane protein membrane pass occupies residues 11-31 (LIIIFSIISTSFFTVESIRLF). The Lumenal portion of the chain corresponds to 32–365 (PDSFDDASSD…LQYNQELEIL (334 aa)). N209 carries an N-linked (GlcNAc...) asparagine glycan.

The protein belongs to the glycosyltransferase 8 family.

It localises to the golgi apparatus membrane. It participates in glycan metabolism; pectin biosynthesis. Functionally, may be involved in pectin and/or xylans biosynthesis in cell walls. The polypeptide is Probable galacturonosyltransferase-like 10 (GATL10) (Arabidopsis thaliana (Mouse-ear cress)).